The primary structure comprises 686 residues: Heat shock 70 kDa protein 12B (686 aa).

Residues 12-53 (LYIGSSPERSPVPSPPGSPRTQESCGIAPLTPSQSPKPEVRA) are disordered. A phosphoserine mark is found at serine 25 and serine 29. At threonine 42 the chain carries Phosphothreonine. 3 positions are modified to phosphoserine: serine 44, serine 46, and serine 276.

Belongs to the heat shock protein 70 family. As to expression, highest expression in muscle and heart. Lower levels in liver and kidney.

This Homo sapiens (Human) protein is Heat shock 70 kDa protein 12B (HSPA12B).